Here is a 93-residue protein sequence, read N- to C-terminus: Bombyxin-related peptide B (93 aa).

The N-terminal stretch at 1–21 (MKFVLVLVSLALLVSLASVQG) is a signal peptide. 3 disulfides stabilise this stretch: Cys25–Cys80, Cys37–Cys93, and Cys79–Cys84. A propeptide spans 47–71 (SGAMGAAAMYGTRGWRWAAMGGNRG) (c peptide like).

The protein belongs to the insulin family. As to quaternary structure, heterodimer of a B chain and an A chain linked by two disulfide bonds. Located in 4 pairs of medial neurosecretory cells in the brain.

The protein resides in the secreted. This is Bombyxin-related peptide B from Agrius convolvuli (Convolvulus hawk-moth).